We begin with the raw amino-acid sequence, 501 residues long: Glycerol kinase (501 aa).

An ADP-binding site is contributed by Thr-12. The ATP site is built by Thr-12, Thr-13, and Ser-14. Sn-glycerol 3-phosphate is bound at residue Thr-12. Residue Arg-16 participates in ADP binding. Arg-82, Glu-83, Tyr-134, and Asp-244 together coordinate sn-glycerol 3-phosphate. 5 residues coordinate glycerol: Arg-82, Glu-83, Tyr-134, Asp-244, and Gln-245. Residues Thr-266 and Gly-310 each coordinate ADP. Residues Thr-266, Gly-310, Gln-314, and Gly-411 each contribute to the ATP site. Positions 411 and 415 each coordinate ADP.

This sequence belongs to the FGGY kinase family.

It carries out the reaction glycerol + ATP = sn-glycerol 3-phosphate + ADP + H(+). It participates in polyol metabolism; glycerol degradation via glycerol kinase pathway; sn-glycerol 3-phosphate from glycerol: step 1/1. Its activity is regulated as follows. Inhibited by fructose 1,6-bisphosphate (FBP). Its function is as follows. Key enzyme in the regulation of glycerol uptake and metabolism. Catalyzes the phosphorylation of glycerol to yield sn-glycerol 3-phosphate. In Methylobacterium radiotolerans (strain ATCC 27329 / DSM 1819 / JCM 2831 / NBRC 15690 / NCIMB 10815 / 0-1), this protein is Glycerol kinase.